The sequence spans 483 residues: Pentatricopeptide repeat-containing protein At5g18950 (483 aa).

PPR repeat units lie at residues 144–178 (EPTL…GISS), 179–213 (SVVT…EFDS), 218–246 (CLIR…GLDP), 247–281 (GQYV…NHFP), 282–316 (SMYI…GYAP), 317–351 (DRVV…GMRP), 352–386 (NEFA…GYGG), 387–421 (TMLS…GVTP), and 422–456 (NAIT…GLKP).

The protein belongs to the PPR family. P subfamily.

In Arabidopsis thaliana (Mouse-ear cress), this protein is Pentatricopeptide repeat-containing protein At5g18950.